The chain runs to 802 residues: Peptidyl serine alpha-galactosyltransferase (802 aa).

The first 19 residues, 1 to 19 (MRWDLITAIVAALVVSVLA), serve as a signal peptide directing secretion. Topologically, residues 20-750 (DESGQMAPYR…SEGRFSTLKL (731 aa)) are extracellular. N-linked (GlcNAc...) asparagine glycans are attached at residues Asn214, Asn275, Asn425, and Asn637. The disordered stretch occupies residues 699–741 (RNCPEPGSESTEKISVSRKVGNIETKQTQGSDETKESSGSSES). The chain crosses the membrane as a helical span at residues 751-771 (WVIALWLISGVGFLVVMLLVF). Over 772-802 (STRRGRGTTRGKGYRNKRRTSYSNTGFLDTK) the chain is Cytoplasmic. The segment covering 777–791 (RGTTRGKGYRNKRRT) has biased composition (basic residues). Residues 777-802 (RGTTRGKGYRNKRRTSYSNTGFLDTK) form a disordered region. The segment covering 792–802 (SYSNTGFLDTK) has biased composition (polar residues).

It localises to the endoplasmic reticulum membrane. In terms of biological role, glycosyltransferase involved in the O-galactosylation of several proteins including extensins. Catalyzes the transfer of alpha-galactosyl to Ser residues. Hydroxylation of proline residues adjacent to the serine acceptor is required for activity. This Arabidopsis thaliana (Mouse-ear cress) protein is Peptidyl serine alpha-galactosyltransferase.